The primary structure comprises 563 residues: Delta-1-pyrroline-5-carboxylate dehydrogenase, mitochondrial (563 aa).

A mitochondrion-targeting transit peptide spans Met-1–Trp-23. N6-succinyllysine is present on Lys-30. Ser-43 bears the Phosphoserine mark. At Lys-51 the chain carries N6-acetyllysine. Lys-92, Lys-98, Lys-113, Lys-129, and Lys-174 each carry N6-acetyllysine; alternate. 5 positions are modified to N6-succinyllysine; alternate: Lys-92, Lys-98, Lys-113, Lys-129, and Lys-174. NAD(+) is bound by residues Ser-207, Lys-232, and Gly-285 to Thr-289. The active-site Proton acceptor is Glu-313. Residue Lys-317 is modified to N6-acetyllysine. N6-succinyllysine is present on Lys-346. Cys-347 (nucleophile) is an active-site residue. 2 positions are modified to N6-acetyllysine: Lys-364 and Lys-375. N6-succinyllysine is present on Lys-394. Glu-446 contributes to the NAD(+) binding site. Residue Lys-461 is modified to N6-acetyllysine. N6-acetyllysine; alternate is present on Lys-508. N6-succinyllysine; alternate is present on Lys-508. Ser-512 lines the substrate pocket.

The protein belongs to the aldehyde dehydrogenase family. Homodimer.

It is found in the mitochondrion matrix. The enzyme catalyses L-glutamate 5-semialdehyde + NAD(+) + H2O = L-glutamate + NADH + 2 H(+). The protein operates within amino-acid degradation; L-proline degradation into L-glutamate; L-glutamate from L-proline: step 2/2. Irreversible conversion of delta-1-pyrroline-5-carboxylate (P5C), derived either from proline or ornithine, to glutamate. This is a necessary step in the pathway interconnecting the urea and tricarboxylic acid cycles. The preferred substrate is glutamic gamma-semialdehyde, other substrates include succinic, glutaric and adipic semialdehydes. The protein is Delta-1-pyrroline-5-carboxylate dehydrogenase, mitochondrial (Aldh4a1) of Rattus norvegicus (Rat).